The chain runs to 132 residues: MVMTDPIADLLTRVRNANAVRHEVVEVPSSNVKKEIANILLQEGYIKEINEYNDGVVPMLRLSLKYGANKERVITGIKRISKPGLRVYCKKDEVPKVLNGLGIAVVSTSNGIMVDREARKNGLGGEVICYVW.

The protein belongs to the universal ribosomal protein uS8 family. In terms of assembly, part of the 30S ribosomal subunit. Contacts proteins S5 and S12.

Functionally, one of the primary rRNA binding proteins, it binds directly to 16S rRNA central domain where it helps coordinate assembly of the platform of the 30S subunit. This is Small ribosomal subunit protein uS8 from Clostridium beijerinckii (strain ATCC 51743 / NCIMB 8052) (Clostridium acetobutylicum).